A 309-amino-acid polypeptide reads, in one-letter code: Homoserine kinase (309 aa).

Residue 91–101 (PIGSGLGSSAC) participates in ATP binding.

The protein belongs to the GHMP kinase family. Homoserine kinase subfamily.

It localises to the cytoplasm. It carries out the reaction L-homoserine + ATP = O-phospho-L-homoserine + ADP + H(+). The protein operates within amino-acid biosynthesis; L-threonine biosynthesis; L-threonine from L-aspartate: step 4/5. In terms of biological role, catalyzes the ATP-dependent phosphorylation of L-homoserine to L-homoserine phosphate. The protein is Homoserine kinase of Buchnera aphidicola subsp. Acyrthosiphon pisum (strain APS) (Acyrthosiphon pisum symbiotic bacterium).